A 415-amino-acid polypeptide reads, in one-letter code: MEKMNITDQAHDAFVKAHPQGDLLQLTQWAETKTLTGWYSRRIAVGEDDEIVGVAQLLFKKVPKLPYTLCYISRGFVTDYSNKLALETLLEAAMQIAKEEKAYAIKIDPDVEVDKGADALSNLRALGFKHKGFKEGLSKDYIQPRMTMITPIEKTDVALIQSFERRNRSKVRLALKRGTTVERSNREGLKTFANLMQITGERDGFLTRDISYFENIYDALHPDGDAELFLVKLEPKPVLEDLRQELHELEDEKAKLADKKQDKKTLNKINDADNKIAKTQELIDEMVTLESTHPEGIYLSGALLMFAGKKSYYLYGASSNEYRNFLPNHHMQFAMMQYAREHGATSYDFGGTDNNPDKDSDHYGLWTFKKVWGTYLSEKIGEFDYVLNAPLYQIIENIKPKLTKAKIKLSRKLKK.

The protein belongs to the FemABX family.

The protein resides in the cytoplasm. It carries out the reaction beta-D-GlcNAc-(1-&gt;4)-Mur2Ac(oyl-L-Ala-D-isoglutaminyl-L-Lys-D-Ala-D-Ala)-di-trans,octa-cis-undecaprenyl diphosphate + glycyl-tRNA(Gly) = beta-D-GlcNAc-(1-&gt;4)-Mur2Ac(oyl-L-Ala-D-isoglutaminyl-L-Lys-(N(6)-Gly)-D-Ala-D-Ala)-di-trans,octa-cis-undecaprenyl diphosphate + tRNA(Gly) + H(+). Functionally, catalyzes the incorporation of amino acid(s) into the interchain peptide bridge of peptidoglycan, using aminoacyl-tRNA as amino acid donor. This is Lipid II:glycine glycyltransferase (femX) from Staphylococcus saprophyticus subsp. saprophyticus (strain ATCC 15305 / DSM 20229 / NCIMB 8711 / NCTC 7292 / S-41).